The chain runs to 189 residues: Casparian strip membrane protein 1 (189 aa).

Residues 1-25 (MMQAESGSAEAKGPLPPPVGRKRRG) lie on the Cytoplasmic side of the membrane. The chain crosses the membrane as a helical span at residues 26-46 (LGILDFLLRLLAIGATLSAAI). The Extracellular segment spans residues 47–73 (TMGTTNETLQFFTQFFQFKARFYDLSA). Asn-52 is a glycosylation site (N-linked (GlcNAc...) asparagine). Residues 74-94 (FIYFVIANAIVGGYLLLSLPI) traverse the membrane as a helical segment. Over 95–108 (SILNIVRPRAASSR) the chain is Cytoplasmic. Residues 109–129 (VFLIFFDTVMVAVCTSGAAAA) form a helical membrane-spanning segment. The Extracellular portion of the chain corresponds to 130-158 (VAILYVARKGNSRTNWFAICQRFNSFCNQ). A helical membrane pass occupies residues 159-179 (AIGAVSASFAGVVFLILLVLL). Residues 180 to 189 (SASTLYRRRP) are Cytoplasmic-facing.

It belongs to the Casparian strip membrane proteins (CASP) family. As to quaternary structure, homodimer and heterodimers.

Its subcellular location is the cell membrane. Functionally, regulates membrane-cell wall junctions and localized cell wall deposition. Required for establishment of the Casparian strip membrane domain (CSD) and the subsequent formation of Casparian strips, a cell wall modification of the root endodermis that determines an apoplastic barrier between the intraorganismal apoplasm and the extraorganismal apoplasm and prevents lateral diffusion. The chain is Casparian strip membrane protein 1 from Picea glauca (White spruce).